The chain runs to 153 residues: Ubiquitin-conjugating enzyme E2 35 (153 aa).

In terms of domain architecture, UBC core spans 5-151 (NLPRRIIKET…AKEWTRLYAS (147 aa)). The Glycyl thioester intermediate role is filled by C89.

Belongs to the ubiquitin-conjugating enzyme family. Interacts with yeast and human Mms2, with the RING domain of RGLG2 and with UEV1A, UEV1B, UEV1C and UEV1D. Ubiquitously expressed at low level. Mainly expressed in the vasculature.

The catalysed reaction is S-ubiquitinyl-[E1 ubiquitin-activating enzyme]-L-cysteine + [E2 ubiquitin-conjugating enzyme]-L-cysteine = [E1 ubiquitin-activating enzyme]-L-cysteine + S-ubiquitinyl-[E2 ubiquitin-conjugating enzyme]-L-cysteine.. It functions in the pathway protein modification; protein ubiquitination. Its function is as follows. Catalyzes the synthesis of non-canonical poly-ubiquitin chains that are linked through 'Lys-63'. This type of poly-ubiquitination does not lead to protein degradation by the proteasome. Mediates transcriptional activation of target genes. Required for postreplication repair of UV-damaged DNA and for adapting root developmental programs to suboptimal availability of iron. This chain is Ubiquitin-conjugating enzyme E2 35 (UBC35), found in Arabidopsis thaliana (Mouse-ear cress).